Here is a 257-residue protein sequence, read N- to C-terminus: Hydroxyacylglutathione hydrolase (257 aa).

7 residues coordinate Zn(2+): H55, H57, D59, H60, H112, D129, and H167.

This sequence belongs to the metallo-beta-lactamase superfamily. Glyoxalase II family. As to quaternary structure, monomer. Zn(2+) serves as cofactor.

It catalyses the reaction an S-(2-hydroxyacyl)glutathione + H2O = a 2-hydroxy carboxylate + glutathione + H(+). It participates in secondary metabolite metabolism; methylglyoxal degradation; (R)-lactate from methylglyoxal: step 2/2. Thiolesterase that catalyzes the hydrolysis of S-D-lactoyl-glutathione to form glutathione and D-lactic acid. The chain is Hydroxyacylglutathione hydrolase from Pseudoalteromonas translucida (strain TAC 125).